A 115-amino-acid polypeptide reads, in one-letter code: Anamorsin homolog 1 (115 aa).

A disordered region spans residues 30–115 (VKEATKGEDC…KVKLNLTDDI (86 aa)). [2Fe-2S] cluster is bound by residues cysteine 39, cysteine 46, cysteine 49, and cysteine 51. Residues 39–51 (CTTRRRACKNCTC) form a fe-S binding site A region. 4 residues coordinate [4Fe-4S] cluster: cysteine 77, cysteine 80, cysteine 88, and cysteine 91. 2 consecutive short sequence motifs (cx2C motif) follow at residues 77 to 80 (CGNC) and 88 to 91 (CATC). The interval 77 to 91 (CGNCAKGDAFRCATC) is fe-S binding site B.

The protein belongs to the anamorsin family. Monomer. The cofactor is [2Fe-2S] cluster. It depends on [4Fe-4S] cluster as a cofactor.

Its subcellular location is the cytoplasm. The protein resides in the mitochondrion intermembrane space. Component of the cytosolic iron-sulfur (Fe-S) protein assembly (CIA) machinery. Required for the maturation of extramitochondrial Fe-S proteins. Part of an electron transfer chain functioning in an early step of cytosolic Fe-S biogenesis, facilitating the de novo assembly of a [4Fe-4S] cluster on the cytosolic Fe-S scaffold complex. Electrons are transferred from NADPH via a FAD- and FMN-containing diflavin oxidoreductase. Together with the diflavin oxidoreductase, also required for the assembly of the diferric tyrosyl radical cofactor of ribonucleotide reductase (RNR), probably by providing electrons for reduction during radical cofactor maturation in the catalytic small subunit. This is Anamorsin homolog 1 from Trypanosoma cruzi (strain CL Brener).